The sequence spans 155 residues: Deoxyuridine 5'-triphosphate nucleotidohydrolase (155 aa).

Residues 71–73, Asn84, 88–90, and Lys98 contribute to the substrate site; these read RSG and TID.

The protein belongs to the dUTPase family. It depends on Mg(2+) as a cofactor.

It catalyses the reaction dUTP + H2O = dUMP + diphosphate + H(+). The protein operates within pyrimidine metabolism; dUMP biosynthesis; dUMP from dCTP (dUTP route): step 2/2. This enzyme is involved in nucleotide metabolism: it produces dUMP, the immediate precursor of thymidine nucleotides and it decreases the intracellular concentration of dUTP so that uracil cannot be incorporated into DNA. The polypeptide is Deoxyuridine 5'-triphosphate nucleotidohydrolase (Corynebacterium jeikeium (strain K411)).